Here is a 397-residue protein sequence, read N- to C-terminus: Elongation factor Tu (397 aa).

The tr-type G domain occupies Lys-10–Val-207. The segment at Gly-19–Thr-26 is G1. Residue Gly-19–Thr-26 coordinates GTP. Thr-26 is a Mg(2+) binding site. Residues Gly-63–Asn-67 form a G2 region. The tract at residues Asp-84 to Gly-87 is G3. GTP is bound by residues Asp-84–His-88 and Asn-139–Asp-142. The segment at Asn-139–Asp-142 is G4. Positions Ser-177–Leu-179 are G5.

The protein belongs to the TRAFAC class translation factor GTPase superfamily. Classic translation factor GTPase family. EF-Tu/EF-1A subfamily. Monomer.

Its subcellular location is the cytoplasm. The enzyme catalyses GTP + H2O = GDP + phosphate + H(+). Its function is as follows. GTP hydrolase that promotes the GTP-dependent binding of aminoacyl-tRNA to the A-site of ribosomes during protein biosynthesis. The chain is Elongation factor Tu from Tropheryma whipplei (strain Twist) (Whipple's bacillus).